The sequence spans 394 residues: Lipid-A-disaccharide synthase (394 aa).

Belongs to the LpxB family.

The catalysed reaction is a lipid X + a UDP-2-N,3-O-bis[(3R)-3-hydroxyacyl]-alpha-D-glucosamine = a lipid A disaccharide + UDP + H(+). It functions in the pathway bacterial outer membrane biogenesis; LPS lipid A biosynthesis. Condensation of UDP-2,3-diacylglucosamine and 2,3-diacylglucosamine-1-phosphate to form lipid A disaccharide, a precursor of lipid A, a phosphorylated glycolipid that anchors the lipopolysaccharide to the outer membrane of the cell. The polypeptide is Lipid-A-disaccharide synthase (lpxB) (Synechocystis sp. (strain ATCC 27184 / PCC 6803 / Kazusa)).